The sequence spans 436 residues: Trigger factor (436 aa).

The 86-residue stretch at 163 to 248 (GDRATIDFEG…VKKIEAAHLP (86 aa)) folds into the PPIase FKBP-type domain.

This sequence belongs to the FKBP-type PPIase family. Tig subfamily.

The protein localises to the cytoplasm. The enzyme catalyses [protein]-peptidylproline (omega=180) = [protein]-peptidylproline (omega=0). Involved in protein export. Acts as a chaperone by maintaining the newly synthesized protein in an open conformation. Functions as a peptidyl-prolyl cis-trans isomerase. This Polaromonas sp. (strain JS666 / ATCC BAA-500) protein is Trigger factor.